The following is a 43-amino-acid chain: METATLVAISISCLLVSFTGYALYTAFGQPSEQLRDPFEEHED.

Residues 5–27 form a helical membrane-spanning segment; it reads TLVAISISCLLVSFTGYALYTAF.

The protein belongs to the PsbN family.

It is found in the plastid. Its subcellular location is the chloroplast thylakoid membrane. In terms of biological role, may play a role in photosystem I and II biogenesis. The polypeptide is Protein PsbN (Cryptomeria japonica (Japanese cedar)).